A 428-amino-acid chain; its full sequence is Serine--tRNA ligase (428 aa).

235–237 is a binding site for L-serine; it reads TAE. ATP is bound at residue 266-268; it reads RSE. Position 289 (glutamate 289) interacts with L-serine. 353-356 lines the ATP pocket; the sequence is EISS. Serine 389 provides a ligand contact to L-serine.

The protein belongs to the class-II aminoacyl-tRNA synthetase family. Type-1 seryl-tRNA synthetase subfamily. Homodimer. The tRNA molecule binds across the dimer.

The protein resides in the cytoplasm. The enzyme catalyses tRNA(Ser) + L-serine + ATP = L-seryl-tRNA(Ser) + AMP + diphosphate + H(+). It carries out the reaction tRNA(Sec) + L-serine + ATP = L-seryl-tRNA(Sec) + AMP + diphosphate + H(+). The protein operates within aminoacyl-tRNA biosynthesis; selenocysteinyl-tRNA(Sec) biosynthesis; L-seryl-tRNA(Sec) from L-serine and tRNA(Sec): step 1/1. Catalyzes the attachment of serine to tRNA(Ser). Is also able to aminoacylate tRNA(Sec) with serine, to form the misacylated tRNA L-seryl-tRNA(Sec), which will be further converted into selenocysteinyl-tRNA(Sec). In Shewanella oneidensis (strain ATCC 700550 / JCM 31522 / CIP 106686 / LMG 19005 / NCIMB 14063 / MR-1), this protein is Serine--tRNA ligase.